The primary structure comprises 202 residues: Histone chaperone ASF1B (202 aa).

An interaction with histone H3 and CHAF1B region spans residues 1–156 (MAKVSVLNVA…TRFHINWDNN (156 aa)). Ser-198 carries the post-translational modification Phosphoserine; by TLK2.

Belongs to the ASF1 family. In terms of assembly, interacts with histone H3 (via C-terminus), including histone H3.1, H3.2 and H3.3, and histone H4; the interaction with H3 is direct. Interacts with the CHAF1A, CHAF1B and RBBP4 subunits of the CAF-1 complex. Interacts with HAT1, NASP and TAF1. Found in a soluble complex with NASP and histones H3 and H4; the interaction with NASP is probably indirect and mediated by H3-H4. Interacts with CDAN1. Found in a cytosolic complex with CDAN1, ASF1A, IPO4 and histones H3.1 and H4. Interacts with CREBBP. Phosphorylated by TLK1 and TLK2.

The protein resides in the nucleus. It is found in the cytoplasm. Its subcellular location is the cytosol. Its function is as follows. Histone chaperone that facilitates histone deposition and histone exchange and removal during nucleosome assembly and disassembly. Cooperates with chromatin assembly factor 1 (CAF-1) to promote replication-dependent chromatin assembly. Also involved in the nuclear import of the histone H3-H4 dimer together with importin-4 (IPO4): specifically recognizes and binds newly synthesized histones with the monomethylation of H3 'Lys-9' (H3K9me1) and diacetylation at 'Lys-5' and 'Lys-12' of H4 (H4K5ac and H4K12ac) marks in the cytosol. Does not participate in replication-independent nucleosome deposition which is mediated by ASF1A and HIRA. Required for gonad development. This chain is Histone chaperone ASF1B (ASF1B), found in Bos taurus (Bovine).